A 374-amino-acid polypeptide reads, in one-letter code: RNA binding protein fox-1 homolog 3 (374 aa).

The span at 1 to 29 shows a compositional bias: pro residues; it reads MAQPYPPAQYPPPPQNGIPAEYAPPPPHP. The segment at 1-105 is disordered; that stretch reads MAQPYPPAQY…QQPKRLHVSN (105 aa). The span at 49 to 74 shows a compositional bias: polar residues; sequence TPAQTHPEQPGTEASTQPIAGTQTVP. The region spanning 99–175 is the RRM domain; that stretch reads KRLHVSNIPF…RKIEVNNATA (77 aa). Position 223 is an asymmetric dimethylarginine; alternate (Arg-223). Arg-223 bears the Omega-N-methylarginine; alternate mark. At Arg-319 the chain carries Asymmetric dimethylarginine.

Phosphorylated. As to expression, widely expressed in brain, including in cerebral cortex, hippocampus, thalamus, caudate/putamen, cerebellum, as well as in the spinal cord (at protein level). Not expressed in all neuronal cells within a region, in cerebellum, expression is absent in Purkinje cells (at protein level). Expressed in the retina in the ganglion cells and some cells in the inner nuclear layer, but absent from the photoreceptor cells and most cells in the inner nuclear layer (at protein level).

Its subcellular location is the nucleus. The protein resides in the cytoplasm. Pre-mRNA alternative splicing regulator. Regulates alternative splicing of RBFOX2 to enhance the production of mRNA species that are targeted for nonsense-mediated decay (NMD). This is RNA binding protein fox-1 homolog 3 (Rbfox3) from Mus musculus (Mouse).